The chain runs to 263 residues: Acyl-[acyl-carrier-protein]--UDP-N-acetylglucosamine O-acyltransferase (263 aa).

Belongs to the transferase hexapeptide repeat family. LpxA subfamily. In terms of assembly, homotrimer.

The protein localises to the cytoplasm. It carries out the reaction a (3R)-hydroxyacyl-[ACP] + UDP-N-acetyl-alpha-D-glucosamine = a UDP-3-O-[(3R)-3-hydroxyacyl]-N-acetyl-alpha-D-glucosamine + holo-[ACP]. The protein operates within glycolipid biosynthesis; lipid IV(A) biosynthesis; lipid IV(A) from (3R)-3-hydroxytetradecanoyl-[acyl-carrier-protein] and UDP-N-acetyl-alpha-D-glucosamine: step 1/6. Involved in the biosynthesis of lipid A, a phosphorylated glycolipid that anchors the lipopolysaccharide to the outer membrane of the cell. In Stenotrophomonas maltophilia (strain K279a), this protein is Acyl-[acyl-carrier-protein]--UDP-N-acetylglucosamine O-acyltransferase.